We begin with the raw amino-acid sequence, 1329 residues long: Synergin gamma (1329 aa).

Positions Met-112 to Ser-152 form a coiled coil. Positions Gly-175 to Phe-211 are disordered. Positions Thr-197 to Ser-209 are enriched in low complexity. The EH domain maps to Asn-393 to Thr-504. The short motif at Asp-555–Phe-559 is the DFXDF motif 1 element. Phosphoserine is present on Ser-571. Over residues Val-578 to Pro-594 the composition is skewed to polar residues. Residues Val-578–Leu-600 form a disordered region. Lys-609 bears the N6-acetyllysine mark. Positions Lys-614–Ser-878 are interaction with AP1G1. Disordered regions lie at residues Gly-661–Gln-701 and Ala-730–Leu-753. Ser-676 is subject to Phosphoserine. Residues Leu-761–Glu-773 form an interaction with AP1G1, AP1G2 and GGA1 region. The DFXDF motif 2 motif lies at Asp-785 to Phe-789. Residues Ile-797–Ser-835 form a disordered region. Over residues Pro-801 to Gly-814 the composition is skewed to basic and acidic residues. A Phosphoserine modification is found at Ser-815. At Lys-836 the chain carries N6-acetyllysine. Residues Ser-844 and Ser-864 each carry the phosphoserine modification. 3 disordered regions span residues Lys-856–Asp-922, His-941–Phe-1042, and Ser-1088–Ser-1113. The span at Ser-864 to Ser-873 shows a compositional bias: basic and acidic residues. The DFXDF motif 3 motif lies at Asp-867 to Phe-871. Low complexity predominate over residues Ser-874–Lys-883. Phosphoserine is present on residues Ser-904, Ser-944, Ser-947, Ser-997, Ser-1021, Ser-1088, Ser-1090, Ser-1102, and Ser-1113. Residues Ser-944–Gly-955 are compositionally biased toward polar residues. The span at Glu-1016–Ser-1028 shows a compositional bias: polar residues. Phosphothreonine is present on Thr-1115.

Self-associates. Interacts with GGA1 (via GAE domain). Interacts with GGA2 and GGA3. Interacts with AP1G1 (via GAE domain), a subunit of adapter protein complex AP-1. Interacts with AP1G2 (via GAE domain) a subunit of adapter protein complex AP-1. Component of the aftiphilin/p200/gamma-synergin complex, at least composed of AFTPH/aftiphilin, HEATR5B/p200a and SYNRG/gamma-synergin, which plays a role in the AP1G1/AP-1-mediated trafficking of transferrin from early to recycling endosomes. Within the complex interacts with AFTPH/aftiphilin and HEATR5B/p200a; the interactions are direct. Interacts (via EH domain) with SCAMP1. As to expression, detected in brain and liver (at protein level). Ubiquitously expressed.

It localises to the cytoplasm. Its subcellular location is the golgi apparatus. The protein localises to the trans-Golgi network membrane. The protein resides in the perinuclear region. It is found in the cytoplasmic vesicle. It localises to the clathrin-coated vesicle. Plays a role in endocytosis and/or membrane trafficking at the trans-Golgi network (TGN). May act by linking the adapter protein complex AP-1 to other proteins. Component of clathrin-coated vesicles. Component of the aftiphilin/p200/gamma-synergin complex, which plays roles in AP1G1/AP-1-mediated protein trafficking including the trafficking of transferrin from early to recycling endosomes, and the membrane trafficking of furin and the lysosomal enzyme cathepsin D between the trans-Golgi network (TGN) and endosomes. This is Synergin gamma (Synrg) from Rattus norvegicus (Rat).